The sequence spans 669 residues: Cell surface receptor daf-1 (669 aa).

Positions 1–19 (MRIRHVVFCLLALVYGAET) are cleaved as a signal peptide. Topologically, residues 20–170 (SDDDLDERTN…APGPQQSSTW (151 aa)) are extracellular. 4 N-linked (GlcNAc...) asparagine glycosylation sites follow: N49, N79, N133, and N154. Residues 171–191 (LILTILALLTFIVLLGIAIFL) form a helical membrane-spanning segment. The Cytoplasmic segment spans residues 192–669 (TRKSWEAKFD…NDDSSRPLLG (478 aa)). Residues 262 to 292 (NNMKDMLDVLEETSGSGMGPTTLHKLTIGGQ) form the GS domain. The Protein kinase domain occupies 293–593 (IRLTGRVGSG…KRMDERQQLL (301 aa)). Residues 299–307 (VGSGRFGNV) and K320 contribute to the ATP site. The active-site Proton acceptor is D423. Composition is skewed to basic and acidic residues over residues 611 to 624 (DRKI…KDES) and 633 to 650 (VQKE…RETA). The interval 611–669 (DRKILGPQKPKDESPANGAPRIVQKEIDREDEQENWRETAKTPNGHISSNDDSSRPLLG) is disordered. Residues 651-661 (KTPNGHISSND) are compositionally biased toward polar residues.

Belongs to the protein kinase superfamily. TKL Ser/Thr protein kinase family. TGFB receptor subfamily. In terms of assembly, may interact with daf-4 to regulate dauer larva development. Head and ventral nerve cord from embryos to adults. Expressed in many sensory neurons. Subset of head neurons show coexpression with daf-4 when dauer/nondauer decision is made. Also expressed in non-neuronal cells: membraneous sheath surrounding the distal end of the intestine and in the distal tip cell of the gonad.

It is found in the membrane. It catalyses the reaction L-threonyl-[receptor-protein] + ATP = O-phospho-L-threonyl-[receptor-protein] + ADP + H(+). The enzyme catalyses L-seryl-[receptor-protein] + ATP = O-phospho-L-seryl-[receptor-protein] + ADP + H(+). Its function is as follows. Probably involved in a TGF-beta pathway. May be a receptor for TGF-beta-like ligand daf-7. Controls the decision of whether or not larvae enter a developmentally arrested state, known as dauer, in response to environmental conditions. Involved in regulating entry into quiescence triggered by satiety. Involved in sensitivity to CO2 levels. In AWC neurons, acts to promote expression of srsx-3, a member of the GPCR family. The sequence is that of Cell surface receptor daf-1 (daf-1) from Caenorhabditis elegans.